The sequence spans 675 residues: UvrABC system protein B (675 aa).

The Helicase ATP-binding domain maps to 32-417; it reads EGLSDGLAYQ…EHAGQVVEQV (386 aa). Position 45-52 (45-52) interacts with ATP; the sequence is GVTGSGKT. Residues 98-121 carry the Beta-hairpin motif; that stretch reads YYDYYQPEAYVPSRDLFIEKDSAI. A Helicase C-terminal domain is found at 436–602; sequence QVDDLMSEIN…QIKKQVKDII (167 aa). The UVR domain maps to 634–669; that stretch reads IKEIAKLEKAMQQAARDLQFEEAAVLRDRIRDIKEN.

It belongs to the UvrB family. In terms of assembly, forms a heterotetramer with UvrA during the search for lesions. Interacts with UvrC in an incision complex.

The protein resides in the cytoplasm. In terms of biological role, the UvrABC repair system catalyzes the recognition and processing of DNA lesions. A damage recognition complex composed of 2 UvrA and 2 UvrB subunits scans DNA for abnormalities. Upon binding of the UvrA(2)B(2) complex to a putative damaged site, the DNA wraps around one UvrB monomer. DNA wrap is dependent on ATP binding by UvrB and probably causes local melting of the DNA helix, facilitating insertion of UvrB beta-hairpin between the DNA strands. Then UvrB probes one DNA strand for the presence of a lesion. If a lesion is found the UvrA subunits dissociate and the UvrB-DNA preincision complex is formed. This complex is subsequently bound by UvrC and the second UvrB is released. If no lesion is found, the DNA wraps around the other UvrB subunit that will check the other stand for damage. The protein is UvrABC system protein B of Neisseria meningitidis serogroup B (strain ATCC BAA-335 / MC58).